The chain runs to 198 residues: MRWPVPPVGYLLLGGQGLLLTFSLISSQNQTSPVTYPDLNLSAAPEPRDPLGPLVLCSYLPEEFVECDDPVDHMGNGTAQQELRYGCKKFGGQAYGDVEHTQVMCRALDGIECDGPRSFLRGNKPCIKYTGHYFITTLLYSFFLGCFGVDRFCLGHTGTAVGKLLTLGGLGIWWFVDLILLITGGLMPSDNSNWCTIY.

The N-terminal stretch at 1-27 (MRWPVPPVGYLLLGGQGLLLTFSLISS) is a signal peptide. Topologically, residues 28 to 128 (QNQTSPVTYP…FLRGNKPCIK (101 aa)) are extracellular. N-linked (GlcNAc...) asparagine glycans are attached at residues Asn-29, Asn-40, and Asn-76. Residues 129 to 149 (YTGHYFITTLLYSFFLGCFGV) form a helical membrane-spanning segment. The region spanning 131–179 (GHYFITTLLYSFFLGCFGVDRFCLGHTGTAVGKLLTLGGLGIWWFVDLI) is the TM2 domain. Topologically, residues 150–166 (DRFCLGHTGTAVGKLLT) are cytoplasmic. A helical membrane pass occupies residues 167 to 187 (LGGLGIWWFVDLILLITGGLM). Over 188-198 (PSDNSNWCTIY) the chain is Extracellular.

The protein belongs to the TM2 family.

It is found in the membrane. In Xenopus tropicalis (Western clawed frog), this protein is TM2 domain-containing protein 2 (tm2d2).